Reading from the N-terminus, the 230-residue chain is Ribosomal RNA small subunit methyltransferase G (230 aa).

S-adenosyl-L-methionine contacts are provided by residues Gly74, Phe79, 124–125 (AE), and Arg141.

It belongs to the methyltransferase superfamily. RNA methyltransferase RsmG family.

It is found in the cytoplasm. Its function is as follows. Specifically methylates the N7 position of a guanine in 16S rRNA. The chain is Ribosomal RNA small subunit methyltransferase G from Acholeplasma laidlawii (strain PG-8A).